The chain runs to 255 residues: Pimeloyl-[acyl-carrier protein] methyl ester esterase (255 aa).

The AB hydrolase-1 domain maps to leucine 16 to glutamate 241. Residues tryptophan 22, serine 82–leucine 83, and phenylalanine 143–glutamine 147 each bind substrate. Serine 82 (nucleophile) is an active-site residue. Residues aspartate 207 and histidine 235 contribute to the active site. Residue histidine 235 coordinates substrate.

This sequence belongs to the AB hydrolase superfamily. Carboxylesterase BioH family. Monomer.

Its subcellular location is the cytoplasm. It carries out the reaction 6-carboxyhexanoyl-[ACP] methyl ester + H2O = 6-carboxyhexanoyl-[ACP] + methanol + H(+). The protein operates within cofactor biosynthesis; biotin biosynthesis. Its function is as follows. The physiological role of BioH is to remove the methyl group introduced by BioC when the pimeloyl moiety is complete. It allows to synthesize pimeloyl-ACP via the fatty acid synthetic pathway through the hydrolysis of the ester bonds of pimeloyl-ACP esters. The polypeptide is Pimeloyl-[acyl-carrier protein] methyl ester esterase (Vibrio cholerae serotype O1 (strain ATCC 39315 / El Tor Inaba N16961)).